Here is a 596-residue protein sequence, read N- to C-terminus: Arginine--tRNA ligase (596 aa).

The 'HIGH' region signature appears at 135 to 145; sequence ANPTGPIHIGG. Residues 227–249 form a disordered region; sequence PRVDGGADQDGNPLGEGDSEQRE.

The protein belongs to the class-I aminoacyl-tRNA synthetase family. In terms of assembly, monomer.

Its subcellular location is the cytoplasm. It carries out the reaction tRNA(Arg) + L-arginine + ATP = L-arginyl-tRNA(Arg) + AMP + diphosphate. The chain is Arginine--tRNA ligase from Bifidobacterium adolescentis (strain ATCC 15703 / DSM 20083 / NCTC 11814 / E194a).